A 439-amino-acid chain; its full sequence is 3-phosphoshikimate 1-carboxyvinyltransferase (439 aa).

3-phosphoshikimate is bound by residues lysine 25, serine 26, and arginine 30. Lysine 25 serves as a coordination point for phosphoenolpyruvate. Phosphoenolpyruvate-binding residues include glycine 96 and arginine 124. Residues serine 170, serine 171, glutamine 172, serine 202, aspartate 324, and lysine 351 each contribute to the 3-phosphoshikimate site. Glutamine 172 contacts phosphoenolpyruvate. The active-site Proton acceptor is aspartate 324. Phosphoenolpyruvate is bound by residues arginine 355, arginine 399, and lysine 424.

Belongs to the EPSP synthase family. In terms of assembly, monomer.

The protein localises to the cytoplasm. The enzyme catalyses 3-phosphoshikimate + phosphoenolpyruvate = 5-O-(1-carboxyvinyl)-3-phosphoshikimate + phosphate. It participates in metabolic intermediate biosynthesis; chorismate biosynthesis; chorismate from D-erythrose 4-phosphate and phosphoenolpyruvate: step 6/7. In terms of biological role, catalyzes the transfer of the enolpyruvyl moiety of phosphoenolpyruvate (PEP) to the 5-hydroxyl of shikimate-3-phosphate (S3P) to produce enolpyruvyl shikimate-3-phosphate and inorganic phosphate. This chain is 3-phosphoshikimate 1-carboxyvinyltransferase, found in Bordetella avium (strain 197N).